The primary structure comprises 121 residues: Small ribosomal subunit protein uS13 (121 aa).

The segment at 94–121 (GLPVRGQNTKNNARTRKGKAVAIAGKKK) is disordered. Over residues 106–121 (ARTRKGKAVAIAGKKK) the composition is skewed to basic residues.

This sequence belongs to the universal ribosomal protein uS13 family. In terms of assembly, part of the 30S ribosomal subunit. Forms a loose heterodimer with protein S19. Forms two bridges to the 50S subunit in the 70S ribosome.

Located at the top of the head of the 30S subunit, it contacts several helices of the 16S rRNA. In the 70S ribosome it contacts the 23S rRNA (bridge B1a) and protein L5 of the 50S subunit (bridge B1b), connecting the 2 subunits; these bridges are implicated in subunit movement. Contacts the tRNAs in the A and P-sites. This chain is Small ribosomal subunit protein uS13, found in Streptococcus sanguinis (strain SK36).